The chain runs to 407 residues: Nicotinate phosphoribosyltransferase (407 aa).

H224 bears the Phosphohistidine; by autocatalysis mark.

The protein belongs to the NAPRTase family. Transiently phosphorylated on a His residue during the reaction cycle. Phosphorylation strongly increases the affinity for substrates and increases the rate of nicotinate D-ribonucleotide production. Dephosphorylation regenerates the low-affinity form of the enzyme, leading to product release.

It catalyses the reaction nicotinate + 5-phospho-alpha-D-ribose 1-diphosphate + ATP + H2O = nicotinate beta-D-ribonucleotide + ADP + phosphate + diphosphate. It functions in the pathway cofactor biosynthesis; NAD(+) biosynthesis; nicotinate D-ribonucleotide from nicotinate: step 1/1. In terms of biological role, catalyzes the synthesis of beta-nicotinate D-ribonucleotide from nicotinate and 5-phospho-D-ribose 1-phosphate at the expense of ATP. In Pseudomonas syringae pv. tomato (strain ATCC BAA-871 / DC3000), this protein is Nicotinate phosphoribosyltransferase.